A 338-amino-acid polypeptide reads, in one-letter code: Plasminogen (338 aa).

The Kringle 5 domain maps to 9 to 88 (CMLGIGKGYQ…LFDYCDVPQC (80 aa)). Intrachain disulfides connect Cys-9-Cys-88, Cys-30-Cys-71, Cys-59-Cys-83, Cys-95-Cys-213, Cys-105-Cys-113, Cys-135-Cys-151, Cys-227-Cys-294, Cys-257-Cys-273, and Cys-284-Cys-312. The Peptidase S1 domain occupies 109 to 336 (IVGGCVAIAH…FINWIERIMQ (228 aa)). Ser-125 is subject to Phosphoserine. Residues His-150 and Asp-193 each act as charge relay system in the active site. Ser-288 functions as the Charge relay system in the catalytic mechanism.

Belongs to the peptidase S1 family. Plasminogen subfamily. Interacts with CSPG4 and AMOT. Interacts (via the Kringle domains) with HRG; the interaction tethers PLG to the cell surface and enhances its activation. Interacts (via Kringle 4 domain) with ADA; the interaction stimulates PLG activation when in complex with DPP4. Angiostatin: Interacts with ATP5F1A; the interaction inhibits most of the angiogenic effects of angiostatin.

The protein localises to the secreted. It carries out the reaction Preferential cleavage: Lys-|-Xaa &gt; Arg-|-Xaa, higher selectivity than trypsin. Converts fibrin into soluble products.. Its activity is regulated as follows. Converted into plasmin by plasminogen activators, both plasminogen and its activator being bound to fibrin. Activated with catalytic amounts of streptokinase. Functionally, plasmin dissolves the fibrin of blood clots and acts as a proteolytic factor in a variety of other processes including embryonic development, tissue remodeling, tumor invasion, and inflammation. In ovulation, weakens the walls of the Graafian follicle. It activates the urokinase-type plasminogen activator, collagenases and several complement zymogens, such as C1, C4 and C5. Cleavage of fibronectin and laminin leads to cell detachment and apoptosis. Also cleaves fibrin, thrombospondin and von Willebrand factor. Its role in tissue remodeling and tumor invasion may be modulated by CSPG4. Binds to cells. The protein is Plasminogen (PLG) of Equus caballus (Horse).